Consider the following 267-residue polypeptide: Digeranylgeranylglyceryl phosphate synthase (267 aa).

The next 7 helical transmembrane spans lie at 10-30 (ANCV…GALL), 33-53 (LHTP…GNAI), 80-100 (AALI…GLIN), 104-121 (LALA…AARL), 139-159 (TFLF…LSIL), 198-218 (VLAS…PLGI), and 247-267 (QRWI…GYHI).

The protein belongs to the UbiA prenyltransferase family. DGGGP synthase subfamily. Mg(2+) serves as cofactor.

Its subcellular location is the cell membrane. It catalyses the reaction sn-3-O-(geranylgeranyl)glycerol 1-phosphate + (2E,6E,10E)-geranylgeranyl diphosphate = 2,3-bis-O-(geranylgeranyl)-sn-glycerol 1-phosphate + diphosphate. It participates in membrane lipid metabolism; glycerophospholipid metabolism. Functionally, prenyltransferase that catalyzes the transfer of the geranylgeranyl moiety of geranylgeranyl diphosphate (GGPP) to the C2 hydroxyl of (S)-3-O-geranylgeranylglyceryl phosphate (GGGP). This reaction is the second ether-bond-formation step in the biosynthesis of archaeal membrane lipids. This chain is Digeranylgeranylglyceryl phosphate synthase, found in Methanothrix thermoacetophila (strain DSM 6194 / JCM 14653 / NBRC 101360 / PT) (Methanosaeta thermophila).